Reading from the N-terminus, the 947-residue chain is Serine-aspartate repeat-containing protein C (947 aa).

The N-terminal stretch at 1 to 50 is a signal peptide; that stretch reads MNNKKTATNRKGMIPNRLNKFSIRKYSVGTASILVGTTLIFGLSGHEAKA. The disordered stretch occupies residues 51 to 164; that stretch reads AEHTNGELNQ…STTPKTTTIK (114 aa). Residues 51 to 495 are ligand binding A region; it reads AEHTNGELNQ…GSSTANGDQK (445 aa). Over residues 56–71 the composition is skewed to polar residues; it reads GELNQSKNETTAPSEN. The span at 72–83 shows a compositional bias: basic and acidic residues; the sequence is KTTKKVDSRQLK. A compositionally biased stretch (polar residues) spans 84 to 155; sequence DNTQTATADQ…SNLTQAKDVS (72 aa). CNA-B domains are found at residues 496–606 and 607–717; these read KYNL…YKTP and KYSL…EEET. The interval 678 to 927 is disordered; it reads TQTGTNTTED…NNSNNGTLFG (250 aa). Composition is skewed to acidic residues over residues 685–695 and 712–886; these read TEDDKDADGGE and YYEE…DSDS. The LPXTG sorting signal motif lies at 910–914; it reads LPETG. Positions 912-927 are enriched in low complexity; it reads ETGSENNNSNNGTLFG. Thr913 carries the post-translational modification Pentaglycyl murein peptidoglycan amidated threonine. A propeptide spans 914-947 (removed by sortase); it reads GSENNNSNNGTLFGGLFAALGSLLLFGRRKKQNK.

Belongs to the serine-aspartate repeat-containing protein (SDr) family. Homodimerizes; via N2-Domain. Interacts with host NRXN1; this interaction mediates bacterial attachment to host cells.

The protein localises to the secreted. It localises to the cell wall. Functionally, cell surface-associated calcium-binding protein which plays an important role in adhesion and pathogenesis. Mediates interactions with components of the extracellular matrix such as host NRXN1 to promote bacterial adhesion. The sequence is that of Serine-aspartate repeat-containing protein C (sdrC) from Staphylococcus aureus (strain COL).